Reading from the N-terminus, the 399-residue chain is S-adenosylmethionine synthase (399 aa).

H17 contributes to the ATP binding site. D19 is a binding site for Mg(2+). E45 is a K(+) binding site. Residues E58 and Q101 each contribute to the L-methionine site. Residues 101–111 (QSPDIAQGVDK) form a flexible loop region. ATP contacts are provided by residues 176–178 (DGK), 243–244 (RF), D252, 258–259 (RK), and K279. D252 is a binding site for L-methionine. K283 contributes to the L-methionine binding site.

The protein belongs to the AdoMet synthase family. Homotetramer; dimer of dimers. Mg(2+) is required as a cofactor. The cofactor is K(+).

It localises to the cytoplasm. It carries out the reaction L-methionine + ATP + H2O = S-adenosyl-L-methionine + phosphate + diphosphate. The protein operates within amino-acid biosynthesis; S-adenosyl-L-methionine biosynthesis; S-adenosyl-L-methionine from L-methionine: step 1/1. Its function is as follows. Catalyzes the formation of S-adenosylmethionine (AdoMet) from methionine and ATP. The overall synthetic reaction is composed of two sequential steps, AdoMet formation and the subsequent tripolyphosphate hydrolysis which occurs prior to release of AdoMet from the enzyme. In Staphylococcus epidermidis (strain ATCC 35984 / DSM 28319 / BCRC 17069 / CCUG 31568 / BM 3577 / RP62A), this protein is S-adenosylmethionine synthase.